The following is a 291-amino-acid chain: 4-hydroxy-tetrahydrodipicolinate synthase (291 aa).

T45 lines the pyruvate pocket. The active-site Proton donor/acceptor is Y133. The active-site Schiff-base intermediate with substrate is the K161. Residue I203 coordinates pyruvate.

It belongs to the DapA family. As to quaternary structure, homotetramer; dimer of dimers.

The protein localises to the cytoplasm. It carries out the reaction L-aspartate 4-semialdehyde + pyruvate = (2S,4S)-4-hydroxy-2,3,4,5-tetrahydrodipicolinate + H2O + H(+). It participates in amino-acid biosynthesis; L-lysine biosynthesis via DAP pathway; (S)-tetrahydrodipicolinate from L-aspartate: step 3/4. Its function is as follows. Catalyzes the condensation of (S)-aspartate-beta-semialdehyde [(S)-ASA] and pyruvate to 4-hydroxy-tetrahydrodipicolinate (HTPA). The sequence is that of 4-hydroxy-tetrahydrodipicolinate synthase from Acidithiobacillus ferrooxidans (strain ATCC 23270 / DSM 14882 / CIP 104768 / NCIMB 8455) (Ferrobacillus ferrooxidans (strain ATCC 23270)).